We begin with the raw amino-acid sequence, 668 residues long: UvrABC system protein B (668 aa).

The Helicase ATP-binding domain maps to 36–276 (DNIKGGEKAQ…EEAIKNIMEE (241 aa)). 49 to 56 (GATGTGKT) is an ATP binding site. The Beta-hairpin signature appears at 102-125 (YYDYYQPEAYVPSSDTYIEKDSSV). Residues 440–606 (QMDDLLGEIN…TIKKEIRDLI (167 aa)) enclose the Helicase C-terminal domain. The UVR domain occupies 632–667 (QEAIKKLQKQMHEAAELLDFELAAQIRDMVLELKSM).

The protein belongs to the UvrB family. As to quaternary structure, forms a heterotetramer with UvrA during the search for lesions. Interacts with UvrC in an incision complex.

The protein localises to the cytoplasm. The UvrABC repair system catalyzes the recognition and processing of DNA lesions. A damage recognition complex composed of 2 UvrA and 2 UvrB subunits scans DNA for abnormalities. Upon binding of the UvrA(2)B(2) complex to a putative damaged site, the DNA wraps around one UvrB monomer. DNA wrap is dependent on ATP binding by UvrB and probably causes local melting of the DNA helix, facilitating insertion of UvrB beta-hairpin between the DNA strands. Then UvrB probes one DNA strand for the presence of a lesion. If a lesion is found the UvrA subunits dissociate and the UvrB-DNA preincision complex is formed. This complex is subsequently bound by UvrC and the second UvrB is released. If no lesion is found, the DNA wraps around the other UvrB subunit that will check the other stand for damage. This Streptococcus thermophilus (strain ATCC BAA-491 / LMD-9) protein is UvrABC system protein B.